The primary structure comprises 494 residues: Guanosine-5'-triphosphate,3'-diphosphate pyrophosphatase (494 aa).

Belongs to the GppA/Ppx family. GppA subfamily.

It carries out the reaction guanosine 3'-diphosphate 5'-triphosphate + H2O = guanosine 3',5'-bis(diphosphate) + phosphate + H(+). Its pathway is purine metabolism; ppGpp biosynthesis; ppGpp from GTP: step 2/2. Catalyzes the conversion of pppGpp to ppGpp. Guanosine pentaphosphate (pppGpp) is a cytoplasmic signaling molecule which together with ppGpp controls the 'stringent response', an adaptive process that allows bacteria to respond to amino acid starvation, resulting in the coordinated regulation of numerous cellular activities. The chain is Guanosine-5'-triphosphate,3'-diphosphate pyrophosphatase from Erwinia tasmaniensis (strain DSM 17950 / CFBP 7177 / CIP 109463 / NCPPB 4357 / Et1/99).